The chain runs to 204 residues: 3-isopropylmalate dehydratase small subunit (204 aa).

This sequence belongs to the LeuD family. LeuD type 1 subfamily. In terms of assembly, heterodimer of LeuC and LeuD.

The enzyme catalyses (2R,3S)-3-isopropylmalate = (2S)-2-isopropylmalate. It participates in amino-acid biosynthesis; L-leucine biosynthesis; L-leucine from 3-methyl-2-oxobutanoate: step 2/4. Its function is as follows. Catalyzes the isomerization between 2-isopropylmalate and 3-isopropylmalate, via the formation of 2-isopropylmaleate. The sequence is that of 3-isopropylmalate dehydratase small subunit from Clavibacter michiganensis subsp. michiganensis (strain NCPPB 382).